The following is a 758-amino-acid chain: Vitamin K-dependent gamma-carboxylase (758 aa).

The interval 1–34 (MAVSARPARAPRGSDKVKKDKAAQTSGPRQGSRM) is disordered. Alanine 2 is modified (N-acetylalanine). Residues 2–60 (AVSARPARAPRGSDKVKKDKAAQTSGPRQGSRMGKLLGFEWTDVSSWERLVTLLNRPTD) are Cytoplasmic-facing. Residues 12–22 (RGSDKVKKDKA) are compositionally biased toward basic and acidic residues. A helical membrane pass occupies residues 61–81 (PAGLAVFRFLFGLMMVLDIPQ). Residues 82–113 (ERGLSSLDRRYLDGLEVCRFPLLDALQPLPLD) lie on the Lumenal side of the membrane. Cysteine 99 and cysteine 450 are oxidised to a cystine. The helical transmembrane segment at 114–134 (WMYLIYTIMFLGALGMMLGLC) threads the bilayer. Residues 135–136 (YR) are Cytoplasmic-facing. Residues 137-157 (ISCVLFLLPYWYVFLLDKTSW) form a helical membrane-spanning segment. Residues 158 to 292 (NNHSYLYGLL…VSYFHCMNSQ (135 aa)) lie on the Lumenal side of the membrane. Residues 293–313 (LFSIGMFPYVMLASSPLFCSP) traverse the membrane as a helical segment. At 314 to 363 (EWPRKLVAHCPKKLQELLPLRTAPQPSTSCMYKRSRARGSQKPGLRHKLS) the chain is on the cytoplasmic side. A helical membrane pass occupies residues 364–384 (TAFTLLYLLEQLFLPYSHFLT). The Lumenal portion of the chain corresponds to 385–758 (QGYNNWTNGL…PDSHPVHSEF (374 aa)). Residues 727–758 (PFEPAGEPSPVNTDSSNPNPPEPDSHPVHSEF) form a disordered region. Positions 749–758 (PDSHPVHSEF) are enriched in basic and acidic residues.

As to quaternary structure, monomer. May interact with CALU. In terms of processing, the N-terminus is blocked.

Its subcellular location is the endoplasmic reticulum membrane. It catalyses the reaction 4-carboxy-L-glutamyl-[protein] + 2,3-epoxyphylloquinone + H2O + H(+) = phylloquinol + L-glutamyl-[protein] + CO2 + O2. Functionally, mediates the vitamin K-dependent carboxylation of glutamate residues to calcium-binding gamma-carboxyglutamate (Gla) residues with the concomitant conversion of the reduced hydroquinone form of vitamin K to vitamin K epoxide. Catalyzes gamma-carboxylation of various proteins, such as blood coagulation factors (F2, F7, F9 and F10), osteocalcin (BGLAP) or matrix Gla protein (MGP). The protein is Vitamin K-dependent gamma-carboxylase (GGCX) of Bos taurus (Bovine).